The sequence spans 851 residues: Protein BCK2 (851 aa).

Over residues 1 to 10 (MPKNSHHHRS) the composition is skewed to basic residues. Disordered regions lie at residues 1–91 (MPKN…RKKS), 233–271 (EVVP…MNTK), 315–355 (SLSL…LPEE), 466–504 (FLDG…YITT), and 698–722 (HASR…PNNV). Low complexity predominate over residues 11–23 (SSVNSTKSRSTES). Residues 37–66 (ASGSTQASPDRNSSTGSCSTPVLPTMNVMS) show a composition bias toward polar residues. Basic and acidic residues predominate over residues 71–81 (VLLEDPRDNHT). 4 stretches are compositionally biased toward polar residues: residues 254 to 271 (SETN…MNTK), 334 to 349 (SPRT…SQSK), 489 to 504 (ISDA…YITT), and 702 to 722 (SESN…PNNV). S334 bears the Phosphoserine mark. S757 and S761 each carry phosphoserine.

Dosage dependent suppressor of PKC1 deletion and MPK1 deletion. Involved in cell lysis. The chain is Protein BCK2 (BCK2) from Saccharomyces cerevisiae (strain ATCC 204508 / S288c) (Baker's yeast).